The following is a 1517-amino-acid chain: MSKFKVIEIKEDARPRDFEAFQLRLASPEKIKSWSYGEVKKPETINYRTLKPERDGLFCAKIFGPIRDYECLCGKYKKMRFKGVKCEKCGVEVANSKVRRSRMGHIELVTPVAHIWYVNSLPSRIGTLLGVKMKDLERVLYYEAYIVENPGDAFYDNESTKKVEYCDVLNEEQYQNLMQRYENSGFKARMGGEVVRDLLANLDLVALLNQLKEEMGATNSEAKKKTIIKRLKVVENFLNSNLNANTDSDEAVPNRPEWMMITNLPVLPPDLRPLVALDGGKFAVSDVNDLYRRVINRNTRLKKLMELDAPEIIIRNEKRMLQEAVDALFDNGRRANAVKGANKRPLKSLSEIIKGKQGRFRQNLLGKRVDFSGRSVIVVGPKLRMDQCGLPKKMALELFKPHLLAKLEEKGYATTVKQAKKMIENKTNEVWECLEEVVKGHPVMLNRAPTLHKLSIQAFHPVLVEGKAIQLHPLVCAAFNADFDGDQMAVHVPLSQEAIAECKVLMLSSMNILLPASGKSVTVPSQDMVLGIYYLSLEKAGAKGSHKICTGIDEVMMALESKCLDIHASIQTMVDGRKITTTAGRLIIKSILPDFVPENSWNKVLKKKDIAALVDYVYKQGGLEITASFLDRLKNLGFEYATKAGISISIADIIVPNDKQKAIDEAKKQVREIQNSYNLGLITSGERYNKIIDIWKSTNNVLSKEMMKLVEKDKEGFNSIYMMADSGARGSAAQISQLAAMRGLMTKPDGSIIETPIISNFREGLNVLEYFISTHGARKGLADTALKTANAGYLTRKLIDVAQNVKITIEDCGTHEGVEINEITADSSIIETLEERILGRVLAEDVIDPITNSVLFAEGTLMDEEKAKILGESGIKSVNIRTPITCKAKKGICAKCYGINLGEGKLVKPGEAVGIISAQSIGEPGTQLTLRTFHSGGTASTDLQDRQVSAQKEGFIRFYNLKTYKNKEGKNIVANRRNAAVLLVEPKIKTPFKGVINIENIHEDVIVSIKDKKQEVKYILRKYDLAKPNELAGVSGSIDGKLYLPYQSGMQVEENESIVEVIKEGWNVPNRIPFASEILVEDGEPVVQNIKAGEKGTLKFYILKGDGLDRVKNVKKGDIVKEKGFFVVIADENDREAKRHYIPRESKIEFNDSEKIDDANTIIASAPKKERKVIAEWDAYNNTIIAEIDGVVSFEDIEAGYSADEQIDEATGKRSLVINEYLPSGVRPTLVIAGKGDKAVRYHLEPKTVIFVHDGDKIAQADILAKTPKAAAKSKDITGGLPRVSELFEARKPKNAAVIAEIDGVVRFDKPLRSKERIIIQAEDGTSAEYLIDKSKHIQVRDGEFIHAGEKLTDGVVSSHDVLKILGEKALHYYLISEIQQVYRGQGVVISDKHIEVIVSQMLRQVKVVDSGHTKFIEGDLVSRRKFREENERIIRMGGEPAIAEPVLLGVTRAAIGSDSVISAASFQETTKVLTEASIAGKFDYLEDLKENVILGRMIPVGTGLYGEQNLKLKEQE.

4 residues coordinate Zn(2+): cysteine 71, cysteine 73, cysteine 86, and cysteine 89. Aspartate 482, aspartate 484, and aspartate 486 together coordinate Mg(2+). 4 residues coordinate Zn(2+): cysteine 812, cysteine 886, cysteine 893, and cysteine 896.

It belongs to the RNA polymerase beta' chain family. The RNAP catalytic core consists of 2 alpha, 1 beta, 1 beta' and 1 omega subunit. When a sigma factor is associated with the core the holoenzyme is formed, which can initiate transcription. Requires Mg(2+) as cofactor. The cofactor is Zn(2+).

The enzyme catalyses RNA(n) + a ribonucleoside 5'-triphosphate = RNA(n+1) + diphosphate. In terms of biological role, DNA-dependent RNA polymerase catalyzes the transcription of DNA into RNA using the four ribonucleoside triphosphates as substrates. This Campylobacter jejuni (strain RM1221) protein is DNA-directed RNA polymerase subunit beta'.